The sequence spans 1303 residues: Alpha,alpha-trehalose-phosphate synthase [UDP-forming] 2 (1303 aa).

Disordered stretches follow at residues 1 to 48 (MTVV…NNTT) and 205 to 251 (LQRR…FRGK). Residues 212–221 (SSRGGSLRGS) show a composition bias toward low complexity.

It in the N-terminal section; belongs to the glycosyltransferase 20 family. This sequence in the C-terminal section; belongs to the gob-1 trehalose phosphatase family.

It catalyses the reaction D-glucose 6-phosphate + UDP-alpha-D-glucose = alpha,alpha-trehalose 6-phosphate + UDP + H(+). Catalyzes the production of trehalose from glucose-6-phosphate and UDP-alpha-D-glucose in a 2 step process. This is Alpha,alpha-trehalose-phosphate synthase [UDP-forming] 2 (tps-2) from Aphelenchoides avenae (Mycophagous nematode worm).